The sequence spans 255 residues: Diphthine synthase (255 aa).

Residues leucine 9, aspartate 85, valine 88, 113-114 (SI), leucine 164, alanine 207, and histidine 232 contribute to the S-adenosyl-L-methionine site.

This sequence belongs to the diphthine synthase family. In terms of assembly, homodimer.

It catalyses the reaction 2-[(3S)-amino-3-carboxypropyl]-L-histidyl-[translation elongation factor 2] + 3 S-adenosyl-L-methionine = diphthine-[translation elongation factor 2] + 3 S-adenosyl-L-homocysteine + 3 H(+). It functions in the pathway protein modification; peptidyl-diphthamide biosynthesis. Its function is as follows. S-adenosyl-L-methionine-dependent methyltransferase that catalyzes the trimethylation of the amino group of the modified target histidine residue in translation elongation factor 2 (EF-2), to form an intermediate called diphthine. The three successive methylation reactions represent the second step of diphthamide biosynthesis. The chain is Diphthine synthase from Methanococcus vannielii (strain ATCC 35089 / DSM 1224 / JCM 13029 / OCM 148 / SB).